Here is a 252-residue protein sequence, read N- to C-terminus: Carbohydrate deacetylase (252 aa).

The Mg(2+) site is built by His-59 and His-122.

The protein belongs to the YdjC deacetylase family. As to quaternary structure, homodimer. Mg(2+) serves as cofactor.

Probably catalyzes the deacetylation of acetylated carbohydrates an important step in the degradation of oligosaccharides. In Vibrio cholerae serotype O1 (strain ATCC 39315 / El Tor Inaba N16961), this protein is Carbohydrate deacetylase.